A 559-amino-acid polypeptide reads, in one-letter code: 2,3-bisphosphoglycerate-independent phosphoglycerate mutase (559 aa).

D28 and S81 together coordinate Mn(2+). Residue S81 is the Phosphoserine intermediate of the active site. Substrate-binding positions include H140, R170–D171, R206, R213, R286–R289, and K361. Residues D430, H434, D471, H472, and H501 each contribute to the Mn(2+) site.

The protein belongs to the BPG-independent phosphoglycerate mutase family. In terms of assembly, monomer. Requires Mn(2+) as cofactor.

It localises to the cytoplasm. It catalyses the reaction (2R)-2-phosphoglycerate = (2R)-3-phosphoglycerate. Its pathway is carbohydrate degradation; glycolysis; pyruvate from D-glyceraldehyde 3-phosphate: step 3/5. In terms of biological role, catalyzes the interconversion of 2-phosphoglycerate and 3-phosphoglycerate. The chain is 2,3-bisphosphoglycerate-independent phosphoglycerate mutase (PGM1) from Mesembryanthemum crystallinum (Common ice plant).